The sequence spans 286 residues: Bifunctional protein FolD (286 aa).

Residues 165–167 and S190 contribute to the NADP(+) site; that span reads GRS.

The protein belongs to the tetrahydrofolate dehydrogenase/cyclohydrolase family. Homodimer.

The catalysed reaction is (6R)-5,10-methylene-5,6,7,8-tetrahydrofolate + NADP(+) = (6R)-5,10-methenyltetrahydrofolate + NADPH. It carries out the reaction (6R)-5,10-methenyltetrahydrofolate + H2O = (6R)-10-formyltetrahydrofolate + H(+). Its pathway is one-carbon metabolism; tetrahydrofolate interconversion. Catalyzes the oxidation of 5,10-methylenetetrahydrofolate to 5,10-methenyltetrahydrofolate and then the hydrolysis of 5,10-methenyltetrahydrofolate to 10-formyltetrahydrofolate. This Staphylococcus epidermidis (strain ATCC 12228 / FDA PCI 1200) protein is Bifunctional protein FolD.